Here is a 558-residue protein sequence, read N- to C-terminus: MAKLLSCVLGPRLYKIYRERDTDRAATSVPETPTAVPAASSSSWDSYYQPRALEKHADSILALASVFWSISYYSSPFAFFYLYRKGYLSLSKVVPFSHYAGTLLVLLAGVACLRGIGRWTNPQYRQFITILEATHRNQSAENKRQLANYNFDFRSWPVDFHWEEPSSRKGSRGGPSRRGVALLRPEPLHRGTADTFLNRVKKLPCQITSYLVAHTLGRRMLYPGSVYLLQKALMPVLLQGQARLVEECNGRRAKLLACDGNEIDTMFVDRRGTAEPQGQKLVICCEGNAGFYEVGCVSTPLEAGYSVLGWNHPGFAGSTGVPFPQNEANAMDVVVQFAIHRLGFQPQDIVIYAWSIGGFTATWAAMSYPDISAVILDASFDDLVPLALKVMPDSWRALVTRTVRQHLNLNNAEQLCRFQGPVLLVRRTKDEIITTTVPEDIMSNRGNDLLLKLLQFRYPRVMTEEGLRAVRQWLEASSQLEEASIYSRWEVDEDWCVSVLRSYQAEHGPDFPWSVGEDMSVDGRRQLALFLARKHLHNFEATHCTPLPAQHFQMPWCL.

2 helical membrane passes run 60 to 80 (ILALASVFWSISYYSSPFAFF) and 93 to 113 (VVPFSHYAGTLLVLLAGVACL). Topologically, residues 114 to 558 (RGIGRWTNPQ…AQHFQMPWCL (445 aa)) are cytoplasmic. The region spanning 281-407 (LVICCEGNAG…LVTRTVRQHL (127 aa)) is the AB hydrolase-1 domain. Active-site charge relay system residues include S355, D430, and H507.

Belongs to the AB hydrolase superfamily. ABHD16 family.

It localises to the membrane. The catalysed reaction is 1-heptadecanoyl-2-(5Z,8Z,11Z,14Z-eicosatetraenoyl)-sn-glycero-3-phosphoserine + H2O = 1-heptadecanoyl-sn-glycero-3-phosphoserine + (5Z,8Z,11Z,14Z)-eicosatetraenoate + H(+). It carries out the reaction 1-hexadecanoyl-2-(9Z-octadecenoyl)-sn-glycero-3-phospho-L-serine + H2O = 1-hexadecanoyl-sn-glycero-3-phospho-L-serine + (9Z)-octadecenoate + H(+). The enzyme catalyses 1-octadecanoyl-2-(9Z,12Z-octadecadienoyl)-sn-glycero-3-phosphoserine + H2O = 1-octadecanoyl-sn-glycero-3-phosphoserine + (9Z,12Z)-octadecadienoate + H(+). It catalyses the reaction 1-heptadecanoyl-2-(5Z,8Z,11Z,14Z-eicosatetraenoyl)-sn-glycero-3-phosphocholine + H2O = 1-heptadecanoyl-sn-glycero-3-phosphocholine + (5Z,8Z,11Z,14Z)-eicosatetraenoate + H(+). The catalysed reaction is 1-hexadecanoyl-2-(9Z-octadecenoyl)-sn-glycero-3-phosphoglycerol + H2O = 1-hexadecanoyl-sn-glycero-3-phosphoglycerol + (9Z)-octadecenoate + H(+). It carries out the reaction 1-hexadecanoyl-2-(9Z-octadecenoyl)-sn-glycero-3-phospho-(1D-myo-inositol) + H2O = 1-hexadecanoyl-sn-glycero-3-phospho-(1D-myo-inositol) + (9Z)-octadecenoate + H(+). The enzyme catalyses 1-heptadecanoyl-2-(5Z,8Z,11Z,14Z-eicosatetraenoyl)-sn-glycero-3-phosphoethanolamine + H2O = 1-heptadecanoyl-sn-glycero-3-phosphoethanolamine + (5Z,8Z,11Z,14Z)-eicosatetraenoate + H(+). It catalyses the reaction 1-hexadecanoyl-2-(9Z-octadecenoyl)-sn-glycero-3-phospho-(1'-sn-glycerol) + H2O = 1-hexadecanoyl-sn-glycero-3-phospho-(1'-sn-glycerol) + (9Z)-octadecenoate + H(+). The catalysed reaction is Hydrolyzes glycerol monoesters of long-chain fatty acids.. It carries out the reaction 1-tetradecanoylglycerol + H2O = tetradecanoate + glycerol + H(+). The enzyme catalyses 2-hexadecanoylglycerol + H2O = glycerol + hexadecanoate + H(+). It catalyses the reaction 1-(9Z-octadecenoyl)-glycerol + H2O = glycerol + (9Z)-octadecenoate + H(+). The catalysed reaction is 2-(9Z-octadecenoyl)-glycerol + H2O = glycerol + (9Z)-octadecenoate + H(+). It carries out the reaction 2-(9Z,12Z-octadecadienoyl)-glycerol + H2O = (9Z,12Z)-octadecadienoate + glycerol + H(+). The enzyme catalyses 1-(5Z,8Z,11Z,14Z-eicosatetraenoyl)-glycerol + H2O = glycerol + (5Z,8Z,11Z,14Z)-eicosatetraenoate + H(+). It catalyses the reaction 2-(5Z,8Z,11Z,14Z-eicosatetraenoyl)-glycerol + H2O = glycerol + (5Z,8Z,11Z,14Z)-eicosatetraenoate + H(+). The catalysed reaction is prostaglandin D2-1-glycerol ester + H2O = prostaglandin D2 + glycerol + H(+). It carries out the reaction 2-glyceryl-15-deoxy-Delta(12,14)-prostaglandin J2 + H2O = 15-deoxy-Delta(12,14)-prostaglandin J2 + glycerol + H(+). The enzyme catalyses 1-(9Z,12Z-octadecadienoyl)-glycerol + H2O = (9Z,12Z)-octadecadienoate + glycerol + H(+). Its function is as follows. Phosphatidylserine (PS) lipase that mediates the hydrolysis of phosphatidylserine to generate lysophosphatidylserine (LPS). LPS constitutes a class of signaling lipids that regulates immunological and neurological processes. Has no activity towards diacylglycerol, triacylglycerol or lysophosphatidylserine lipase. Also has monoacylglycerol lipase activity, with preference for 1-(9Z,12Z-octadecadienoyl)-glycerol (1-LG) and 2-glyceryl-15-deoxy-Delta(12,14)-prostaglandin J2 (15d-PGJ(2)-G). The protein is Phosphatidylserine lipase ABHD16A of Rattus norvegicus (Rat).